The primary structure comprises 667 residues: UvrABC system protein C (667 aa).

The 80-residue stretch at Ala-43–Val-122 folds into the GIY-YIG domain. In terms of domain architecture, UVR spans Gln-232–Leu-267.

The protein belongs to the UvrC family. Interacts with UvrB in an incision complex.

The protein resides in the cytoplasm. In terms of biological role, the UvrABC repair system catalyzes the recognition and processing of DNA lesions. UvrC both incises the 5' and 3' sides of the lesion. The N-terminal half is responsible for the 3' incision and the C-terminal half is responsible for the 5' incision. The sequence is that of UvrABC system protein C from Prochlorococcus marinus (strain MIT 9313).